A 124-amino-acid polypeptide reads, in one-letter code: Orexigenic neuropeptide QRFP (124 aa).

The N-terminal stretch at methionine 1–cysteine 17 is a signal peptide. Positions phenylalanine 18–arginine 79 are excised as a propeptide. Residues arginine 63–leucine 101 are disordered. Phenylalanine 122 carries the phenylalanine amide modification.

It belongs to the RFamide neuropeptide family. As to quaternary structure, ligand for the G-protein coupled receptor QRFPR/GPR103. In terms of tissue distribution, expressed in the brain with highest levels in the periventricular hypothalamic nucleus and lateral hypothalamic areas. Expressed at moderate levels in the adrenal gland, eye, heart, intestine, liver, lung, kidney, mesenteric lymph node, ovary, placenta, Peyer patches, skin, spleen, stomach, testis, thymus and uterus.

The protein resides in the secreted. Functionally, stimulates feeding and grooming behavior, metabolic rate and locomotor activity and increases blood pressure. May have orexigenic activity. May promote aldosterone secretion by the adrenal gland. This Mus musculus (Mouse) protein is Orexigenic neuropeptide QRFP.